The following is a 93-amino-acid chain: Co-chaperonin GroES 2 (93 aa).

The tract at residues M1 to A20 is disordered.

This sequence belongs to the GroES chaperonin family. In terms of assembly, heptamer of 7 subunits arranged in a ring. Interacts with the chaperonin GroEL.

Its subcellular location is the cytoplasm. Functionally, together with the chaperonin GroEL, plays an essential role in assisting protein folding. The GroEL-GroES system forms a nano-cage that allows encapsulation of the non-native substrate proteins and provides a physical environment optimized to promote and accelerate protein folding. GroES binds to the apical surface of the GroEL ring, thereby capping the opening of the GroEL channel. The chain is Co-chaperonin GroES 2 from Rhodopirellula baltica (strain DSM 10527 / NCIMB 13988 / SH1).